We begin with the raw amino-acid sequence, 122 residues long: Large ribosomal subunit protein uL14 (122 aa).

The protein belongs to the universal ribosomal protein uL14 family. As to quaternary structure, part of the 50S ribosomal subunit. Forms a cluster with proteins L3 and L19. In the 70S ribosome, L14 and L19 interact and together make contacts with the 16S rRNA in bridges B5 and B8.

Functionally, binds to 23S rRNA. Forms part of two intersubunit bridges in the 70S ribosome. In Fervidobacterium nodosum (strain ATCC 35602 / DSM 5306 / Rt17-B1), this protein is Large ribosomal subunit protein uL14.